Consider the following 410-residue polypeptide: Adenosylhomocysteinase (410 aa).

Substrate contacts are provided by aspartate 117 and glutamate 142. 143 to 145 (TTT) provides a ligand contact to NAD(+). Lysine 172 and aspartate 176 together coordinate substrate. NAD(+) contacts are provided by residues asparagine 177, 206–211 (GYGYCG), glutamate 229, 285–287 (AGH), and asparagine 332.

The protein belongs to the adenosylhomocysteinase family. It depends on NAD(+) as a cofactor.

Its subcellular location is the cytoplasm. It carries out the reaction S-adenosyl-L-homocysteine + H2O = L-homocysteine + adenosine. It functions in the pathway amino-acid biosynthesis; L-homocysteine biosynthesis; L-homocysteine from S-adenosyl-L-homocysteine: step 1/1. In terms of biological role, may play a key role in the regulation of the intracellular concentration of adenosylhomocysteine. This is Adenosylhomocysteinase from Thermoplasma acidophilum (strain ATCC 25905 / DSM 1728 / JCM 9062 / NBRC 15155 / AMRC-C165).